The chain runs to 989 residues: R3H domain-containing protein 2 (989 aa).

Disordered stretches follow at residues 23–71 (EESV…AKSN) and 106–147 (SCPS…QEYT). Basic and acidic residues predominate over residues 36-56 (PSKEEIEKESEDTSLRQETQR). At Ser37 the chain carries Phosphoserine. Residues 58–71 (TSNHGHARKRAKSN) are compositionally biased toward basic residues. The span at 109-143 (SDKEEEKSTKDVSEKEDKDKNKEKVPRRMLSRDSS) shows a compositional bias: basic and acidic residues. Position 143 is a phosphoserine (Ser143). Positions 169–232 (RMMLLKLEQE…AVIINKTSNT (64 aa)) constitute an R3H domain. Residues 233-303 (RIPEQRFSEH…VRERIFARET (71 aa)) form the SUZ domain. Disordered regions lie at residues 267 to 288 (DDNQIRVPLQDGRRSKSIEERE), 306 to 390 (NGYL…ISRP), 416 to 479 (TAQQ…FQPP), 493 to 524 (ASTGQPLPTSNYSTSSHAPPTQQVLPPQGYMQ), 674 to 738 (GTSP…PSMV), 751 to 793 (RGQK…SLSN), and 848 to 867 (QGQSGLKHGNRSKRQALKSA). The span at 277-288 (DGRRSKSIEERE) shows a compositional bias: basic and acidic residues. The segment covering 320-331 (SRTSSSRQSSTD) has biased composition (low complexity). Phosphoserine occurs at positions 344, 347, and 363. A compositionally biased stretch (low complexity) spans 416–428 (TAQQQQQQQQQLP). 2 stretches are compositionally biased toward polar residues: residues 454-466 (PFGQMSLSRQGST) and 493-517 (ASTGQPLPTSNYSTSSHAPPTQQVL). A compositionally biased stretch (pro residues) spans 695-704 (SPSPCSPPQM). Positions 705–727 (PQQYSGVSPSGPGVVVMQLNVPN) are enriched in low complexity. Residues 761-771 (PESSPQANTQM) are compositionally biased toward polar residues. Residues 772–790 (SSSPVTSPTQSPAPSPVTS) show a composition bias toward low complexity. Residues Ser866 and Ser868 each carry the phosphoserine modification. A phosphothreonine mark is found at Thr869 and Thr873.

It is found in the nucleus. This is R3H domain-containing protein 2 (R3HDM2) from Bos taurus (Bovine).